Reading from the N-terminus, the 416-residue chain is MKVTILGAGVIGVTTAYQLAKAGHDVTVVDRQAGPALETSFANAGEVSFGYCSPWAAPGIPQKALKWLFMKHAPLILRPKVDTAMLSWLVKMLSNCTSERYAVNKSRMLRLADYSRIALAEVRAGTGIAYDQRMQGTLQLFRTEQQLDASAKDVKALAADGIPYEVLDRDGCIRVEPALSHARDKIVGGLLTPKDETGDCFKFTNALAAKAVELGVQFLYGRTIKDLQVEGGQIRGVVTDQGAIASDAVVVALGSYSPLLLKQVGISLPVYPVKGYSLTIPIVDPARSPESTVMDETYKIAITRLGDRIRVGGMAEISGYTNDLGLARRNTLEHSVMDLFPGGDVSKAAFWSGLRPMTPDGTPVIGATKIRGLFLNTGHGTLGWTMSCGSARVISDLVSGHKAEIDTADLSVARYG.

An FAD-binding site is contributed by 3-17; sequence VTILGAGVIGVTTAY.

Belongs to the DadA oxidoreductase family. Requires FAD as cofactor.

It catalyses the reaction a D-alpha-amino acid + A + H2O = a 2-oxocarboxylate + AH2 + NH4(+). The protein operates within amino-acid degradation; D-alanine degradation; NH(3) and pyruvate from D-alanine: step 1/1. Oxidative deamination of D-amino acids. The protein is D-amino acid dehydrogenase of Rhizobium rhizogenes (strain K84 / ATCC BAA-868) (Agrobacterium radiobacter).